A 447-amino-acid polypeptide reads, in one-letter code: Beta-glucuronosyltransferase GlcAT14A (447 aa).

The Cytoplasmic portion of the chain corresponds to 1-33 (MKKLRSYYSNVRHHQNHHHHHHHHSNIVSSERK). The chain crosses the membrane as a helical; Signal-anchor for type II membrane protein span at residues 34-54 (WIFFPLLIGSIFALFLLFLTT). Over 55–447 (TLTSPTGGVR…TENFRSKQCK (393 aa)) the chain is Lumenal. 4 N-linked (GlcNAc...) asparagine glycosylation sites follow: Asn-151, Asn-200, Asn-329, and Asn-405.

This sequence belongs to the glycosyltransferase 14 family.

It localises to the golgi apparatus membrane. Beta-glucuronosyltransferase involved in the biosynthesis of type II arabinogalactan (AG). Modifies both the beta-1,6-linked galactan and beta-1,3-linked galactan present in type II AG. Transfers glucuronate to beta-1,6-galactooligosaccharides with degrees of polymerization ranging from 3 to 11. Transfers glucuronate to beta-1,3-galactooligosaccharides with degrees of polymerization ranging from 5 to 7. The addition of glucuronate at the O6 position may terminate galactose chain extension. Required for cell elongation during seedling growth. The chain is Beta-glucuronosyltransferase GlcAT14A from Arabidopsis thaliana (Mouse-ear cress).